We begin with the raw amino-acid sequence, 280 residues long: MNGAAYLSIIRPVNAVVAGLAGILASIIATGSIPAEFFWIFCIVLTITGAGNVINDYYDKEIDAINQPDRPIPSGQIIPGHALMYAILLFLIGNGIAILFTPLPLAGIAMGNSVILWLYASFLKKTPLIGNISVSYLAASIFLFGGAIQGTQGIISVFPIAGATWGVMLARELIKDAEDMPGDNEHGARTFPLLYGIRATIYLALISATAGVLMSLLLYSRWGAFYLGAIILVDAIILFGAIRGMKATNSEEMIKAKSSKILKAGMFASLLVFLLSAVLL.

The next 9 helical transmembrane spans lie at 4-24 (AAYLSIIRPVNAVVAGLAGIL), 27-47 (IIATGSIPAEFFWIFCIVLTI), 83-103 (LMYAILLFLIGNGIAILFTPL), 104-124 (PLAGIAMGNSVILWLYASFLK), 128-148 (LIGNISVSYLAASIFLFGGAI), 150-170 (GTQGIISVFPIAGATWGVMLA), 199-219 (ATIYLALISATAGVLMSLLLY), 222-242 (WGAFYLGAIILVDAIILFGAI), and 260-280 (KILKAGMFASLLVFLLSAVLL).

The protein belongs to the UbiA prenyltransferase family. DGGGP synthase subfamily. Requires Mg(2+) as cofactor.

It is found in the cell membrane. The catalysed reaction is sn-3-O-(geranylgeranyl)glycerol 1-phosphate + (2E,6E,10E)-geranylgeranyl diphosphate = 2,3-bis-O-(geranylgeranyl)-sn-glycerol 1-phosphate + diphosphate. It participates in membrane lipid metabolism; glycerophospholipid metabolism. In terms of biological role, prenyltransferase that catalyzes the transfer of the geranylgeranyl moiety of geranylgeranyl diphosphate (GGPP) to the C2 hydroxyl of (S)-3-O-geranylgeranylglyceryl phosphate (GGGP). This reaction is the second ether-bond-formation step in the biosynthesis of archaeal membrane lipids. The sequence is that of Digeranylgeranylglyceryl phosphate synthase from Methanospirillum hungatei JF-1 (strain ATCC 27890 / DSM 864 / NBRC 100397 / JF-1).